Reading from the N-terminus, the 146-residue chain is MASDFYLRYYVGHKGKFGHEFLEFEFRPDGKLRYANNSNYKNDVMIRKEAYVHKSVMEELKRIIDDSEITKEDDALWPPPDRVGRQELEIVIGDEHISFTTSKIGSLIDVNQSKDPEGLRVFYYLVQDLKCLVFSLIGLHFKIKPI.

The protein belongs to the mago nashi family. In terms of assembly, core component of the mRNA splicing-dependent exon junction complex (EJC); the core complex contains CASC3, EIF4A3, MAGOH, and RBM8A.

It localises to the nucleus. It is found in the nucleus speckle. The protein resides in the cytoplasm. Its function is as follows. Required for pre-mRNA splicing as component of the spliceosome. Core component of the exon junction complex (EJC) and also involved in the nonsense-mediated decay (NMD) pathway. The EJC is a dynamic structure consisting of core proteins and several peripheral nuclear and cytoplasmic associated factors that join the complex only transiently either during EJC assembly or during subsequent mRNA metabolism. The EJC marks the position of the exon-exon junction in the mature mRNA for the gene expression machinery and the core components remain bound to spliced mRNAs throughout all stages of mRNA metabolism thereby influencing downstream processes including nuclear mRNA export, subcellular mRNA localization, translation efficiency and nonsense-mediated mRNA decay (NMD). The chain is Protein mago nashi homolog (MAGOH) from Gallus gallus (Chicken).